The primary structure comprises 390 residues: Galactokinase (390 aa).

Glu34–Asp37 contributes to the substrate binding site. ATP-binding positions include Ser68 and Gly122–Ser128. Residues Ser128 and Glu160 each contribute to the Mg(2+) site. Asp172 (proton acceptor) is an active-site residue. Tyr221 lines the substrate pocket.

Belongs to the GHMP kinase family. GalK subfamily.

The protein localises to the cytoplasm. It carries out the reaction alpha-D-galactose + ATP = alpha-D-galactose 1-phosphate + ADP + H(+). It functions in the pathway carbohydrate metabolism; galactose metabolism. Functionally, catalyzes the transfer of the gamma-phosphate of ATP to D-galactose to form alpha-D-galactose-1-phosphate (Gal-1-P). In Chloroflexus aurantiacus (strain ATCC 29366 / DSM 635 / J-10-fl), this protein is Galactokinase.